A 482-amino-acid polypeptide reads, in one-letter code: Probable 2-carboxy-D-arabinitol-1-phosphatase (482 aa).

The N-terminal 34 residues, 1-34 (MISLPLTTPILPSRCLLHKTRRQNSTRRRLLIRS), are a transit peptide targeting the chloroplast. Histidine 55 acts as the Tele-phosphohistidine intermediate in catalysis. Glutamate 129 (proton donor/acceptor) is an active-site residue.

It belongs to the phosphoglycerate mutase family.

It is found in the plastid. The protein resides in the chloroplast stroma. It carries out the reaction 2-carboxy-D-arabinitol 1-phosphate + H2O = 2-carboxy-D-arabinitol + phosphate. In terms of biological role, phosphoglycerate mutase-like protein lacking PGM activity, but having 2-carboxy-D-arabinitol 1-phosphate (CA1P) phosphatase activity. Prevents the accumulation of D-glycero-2,3-pentodiulose-1,5-bisphosphate (PDBP) a potent inhibitor of ribulose-1,5-bisphosphate carboxylase (RuBisCO). PDBP is produced during the oxidation of ribulose-1,5-bisphosphate, the substrate of RuBisCO. This is Probable 2-carboxy-D-arabinitol-1-phosphatase from Arabidopsis thaliana (Mouse-ear cress).